We begin with the raw amino-acid sequence, 275 residues long: tRNA uridine(34) hydroxylase (275 aa).

One can recognise a Rhodanese domain in the interval 121–214 (SQPDVLVIDT…YLEKTYNKNG (94 aa)). Cysteine 174 functions as the Cysteine persulfide intermediate in the catalytic mechanism.

The protein belongs to the TrhO family.

The enzyme catalyses uridine(34) in tRNA + AH2 + O2 = 5-hydroxyuridine(34) in tRNA + A + H2O. In terms of biological role, catalyzes oxygen-dependent 5-hydroxyuridine (ho5U) modification at position 34 in tRNAs. This chain is tRNA uridine(34) hydroxylase, found in Wolbachia pipientis wMel.